The following is a 132-amino-acid chain: Large ribosomal subunit protein uL24 (132 aa).

This sequence belongs to the universal ribosomal protein uL24 family. Part of the 50S ribosomal subunit.

One of two assembly initiator proteins, it binds directly to the 5'-end of the 23S rRNA, where it nucleates assembly of the 50S subunit. Functionally, one of the proteins that surrounds the polypeptide exit tunnel on the outside of the subunit. The polypeptide is Large ribosomal subunit protein uL24 (Aquifex aeolicus (strain VF5)).